A 264-amino-acid polypeptide reads, in one-letter code: Electron transfer flavoprotein subunit beta (264 aa).

Residues alanine 6, asparagine 36–aspartate 39, valine 64, glycine 119–serine 122, and tyrosine 127–threonine 130 contribute to the AMP site.

As to quaternary structure, heterodimer of an alpha and a beta subunit. Forms a ternary complex with trimethylamine dehydrogenase.

Heterodimeric electron transfer flavoprotein that accepts electrons from trimethylamine dehydrogenase. It transfers the electrons to the main respiratory chain via ETF-ubiquinone oxidoreductase (ETF dehydrogenase). EtfB binds an AMP molecule that probably has a purely structural role. This chain is Electron transfer flavoprotein subunit beta (etfB), found in Methylophilus methylotrophus (Bacterium W3A1).